The primary structure comprises 778 residues: Lon protease (778 aa).

The Lon N-terminal domain maps to 4 to 187 (LPVLPLTDAV…LLVGWVRAHL (184 aa)). 346–353 (GPPGVGKT) is an ATP binding site. The Lon proteolytic domain occupies 581-762 (TAVPGVATGL…ADVLALALRP (182 aa)). Catalysis depends on residues serine 668 and lysine 711.

The protein belongs to the peptidase S16 family. In terms of assembly, homohexamer. Organized in a ring with a central cavity.

The protein resides in the cytoplasm. The enzyme catalyses Hydrolysis of proteins in presence of ATP.. Its function is as follows. ATP-dependent serine protease that mediates the selective degradation of mutant and abnormal proteins as well as certain short-lived regulatory proteins. Required for cellular homeostasis and for survival from DNA damage and developmental changes induced by stress. Degrades polypeptides processively to yield small peptide fragments that are 5 to 10 amino acids long. Binds to DNA in a double-stranded, site-specific manner. In Salinispora arenicola (strain CNS-205), this protein is Lon protease.